Consider the following 380-residue polypeptide: uncharacterized protein (380 aa).

Positions 111–369 (APYSMERHHD…DCLAILAEMI (259 aa)) constitute a Peptidase M14 domain. Residues His164, Glu167, and His257 each contribute to the Zn(2+) site. Glu333 acts as the Proton donor/acceptor in catalysis.

The cofactor is Zn(2+).

This is an uncharacterized protein from Zymomonas mobilis subsp. mobilis (strain ATCC 31821 / ZM4 / CP4).